The sequence spans 312 residues: Homoserine O-acetyltransferase (312 aa).

The Acyl-thioester intermediate role is filled by Cys142. Substrate is bound by residues Lys163 and Ser192. His235 serves as the catalytic Proton acceptor. Glu237 is an active-site residue. Arg249 is a substrate binding site.

The protein belongs to the MetA family.

The protein localises to the cytoplasm. It catalyses the reaction L-homoserine + acetyl-CoA = O-acetyl-L-homoserine + CoA. Its pathway is amino-acid biosynthesis; L-methionine biosynthesis via de novo pathway; O-acetyl-L-homoserine from L-homoserine: step 1/1. In terms of biological role, transfers an acetyl group from acetyl-CoA to L-homoserine, forming acetyl-L-homoserine. The chain is Homoserine O-acetyltransferase from Chelativorans sp. (strain BNC1).